The chain runs to 302 residues: Glutaminase (302 aa).

Substrate contacts are provided by serine 61, asparagine 111, glutamate 155, asparagine 162, tyrosine 186, tyrosine 238, and valine 256.

Belongs to the glutaminase family. Homotetramer.

It carries out the reaction L-glutamine + H2O = L-glutamate + NH4(+). This is Glutaminase from Pseudomonas fluorescens (strain SBW25).